The sequence spans 456 residues: uncharacterized protein (456 aa).

One can recognise a TRAM domain in the interval 2-60 (AMRKGKEYELNIEEIEFPSMGIAYHEGLKVYVKHGIPGQKVLARITTKKKDHAKGKIIE). Positions 73, 79, 82, and 162 each coordinate [4Fe-4S] cluster. The S-adenosyl-L-methionine site is built by Q288, Y317, E338, and D383. C410 acts as the Nucleophile in catalysis.

It belongs to the class I-like SAM-binding methyltransferase superfamily. RNA M5U methyltransferase family.

This is an uncharacterized protein from Clostridium tetani (strain Massachusetts / E88).